A 635-amino-acid chain; its full sequence is MANKSTENGIYSVSGEEKKGPLIAPGPDGAPAKGDGPAALGAPGSLLAVPPRETWTRQMDFIMSCVGFAVGLGNVWRFPYLCYKNGGGVFLIPYILIALIGGIPIFFLEISLGQFMKAGSINVWNICPLFKGLGYASMVIVFYCNTYYIMVLAWGFYYLVKSFTTTLPWATCGHTWNTPDCVEIFRHEDCANATMANLTCDQLADRRSPVIEFWENKVLRLSEGLEVPGALNWEVTLCLLTCWVLVYFCVWKGVKSTGKIVYFTATFPYVVLVVLLVRGVLLPGALDGIIYYLKPDWSKLASPQVWIDAGTQIFFSYAIGLGALTALGSYNRFNNNCYKDAIILALINSGTSFFAGFVVFSILGFMATEQGVHISKVAESGPGLAFIAYPRAVTLMPVAPLWAALFFFMLLLLGLDSQFVGVEGFITGLLDLLPASYYFRFQREISVALCCTICFVIDLSMVTDGGMYVFQLFDYYSASGTTLLWQAFWECVVVAWVYGADRFMDDVACMIGYRPCPWMKWCWSFFTPLVCMGIFIFNVVYHEPLVYNNTYVYPWWGEAVGWAFALSSMLCVPLHLLGCLLRAKGTMAERWQHLTQPIWGLHHLEYRAQDSDVRGLTTLTPVSESSKVVVVESVM.

Residues 1–11 (MANKSTENGIY) show a composition bias toward polar residues. The disordered stretch occupies residues 1 to 27 (MANKSTENGIYSVSGEEKKGPLIAPGP). Topologically, residues 1–60 (MANKSTENGIYSVSGEEKKGPLIAPGPDGAPAKGDGPAALGAPGSLLAVPPRETWTRQMD) are cytoplasmic. A helical membrane pass occupies residues 61–81 (FIMSCVGFAVGLGNVWRFPYL). Topologically, residues 82 to 87 (CYKNGG) are extracellular. The chain crosses the membrane as a helical span at residues 88–108 (GVFLIPYILIALIGGIPIFFL). Residues 109–138 (EISLGQFMKAGSINVWNICPLFKGLGYASM) are Cytoplasmic-facing. A helical membrane pass occupies residues 139-159 (VIVFYCNTYYIMVLAWGFYYL). Residues 160–230 (VKSFTTTLPW…LSEGLEVPGA (71 aa)) lie on the Extracellular side of the membrane. N-linked (GlcNAc...) asparagine glycans are attached at residues asparagine 192 and asparagine 197. The helical transmembrane segment at 231-251 (LNWEVTLCLLTCWVLVYFCVW) threads the bilayer. The Cytoplasmic segment spans residues 252-269 (KGVKSTGKIVYFTATFPY). Residues 270 to 290 (VVLVVLLVRGVLLPGALDGII) form a helical membrane-spanning segment. The Extracellular portion of the chain corresponds to 291–304 (YYLKPDWSKLASPQ). Residues 305–325 (VWIDAGTQIFFSYAIGLGALT) traverse the membrane as a helical segment. Residues 326–341 (ALGSYNRFNNNCYKDA) are Cytoplasmic-facing. A helical transmembrane segment spans residues 342–362 (IILALINSGTSFFAGFVVFSI). Topologically, residues 363–394 (LGFMATEQGVHISKVAESGPGLAFIAYPRAVT) are extracellular. Residues 395 to 415 (LMPVAPLWAALFFFMLLLLGL) traverse the membrane as a helical segment. Residues 416-444 (DSQFVGVEGFITGLLDLLPASYYFRFQRE) lie on the Cytoplasmic side of the membrane. The chain crosses the membrane as a helical span at residues 445–465 (ISVALCCTICFVIDLSMVTDG). Residues 466–479 (GMYVFQLFDYYSAS) are Extracellular-facing. The helical transmembrane segment at 480-500 (GTTLLWQAFWECVVVAWVYGA) threads the bilayer. The Cytoplasmic portion of the chain corresponds to 501–520 (DRFMDDVACMIGYRPCPWMK). The helical transmembrane segment at 521–541 (WCWSFFTPLVCMGIFIFNVVY) threads the bilayer. Over 542-560 (HEPLVYNNTYVYPWWGEAV) the chain is Extracellular. An N-linked (GlcNAc...) asparagine glycan is attached at asparagine 548. Residues 561 to 581 (GWAFALSSMLCVPLHLLGCLL) traverse the membrane as a helical segment. The Cytoplasmic segment spans residues 582–635 (RAKGTMAERWQHLTQPIWGLHHLEYRAQDSDVRGLTTLTPVSESSKVVVVESVM). 2 positions are modified to phosphothreonine: threonine 617 and threonine 620. Residue serine 623 is modified to Phosphoserine.

Belongs to the sodium:neurotransmitter symporter (SNF) (TC 2.A.22) family. SLC6A8 subfamily. Post-translationally, glycosylated.

The protein localises to the cell membrane. Its subcellular location is the apical cell membrane. The catalysed reaction is creatine(out) + chloride(out) + 2 Na(+)(out) = creatine(in) + chloride(in) + 2 Na(+)(in). Creatine:sodium symporter which mediates the uptake of creatine. Plays an important role in supplying creatine to the brain via the blood-brain barrier. The protein is Sodium- and chloride-dependent creatine transporter 1 (SLC6A8) of Bos taurus (Bovine).